The sequence spans 250 residues: 1-(5-phosphoribosyl)-5-[(5-phosphoribosylamino)methylideneamino] imidazole-4-carboxamide isomerase (250 aa).

Residue D12 is the Proton acceptor of the active site. D134 functions as the Proton donor in the catalytic mechanism.

Belongs to the HisA/HisF family.

The protein resides in the cytoplasm. The enzyme catalyses 1-(5-phospho-beta-D-ribosyl)-5-[(5-phospho-beta-D-ribosylamino)methylideneamino]imidazole-4-carboxamide = 5-[(5-phospho-1-deoxy-D-ribulos-1-ylimino)methylamino]-1-(5-phospho-beta-D-ribosyl)imidazole-4-carboxamide. It functions in the pathway amino-acid biosynthesis; L-histidine biosynthesis; L-histidine from 5-phospho-alpha-D-ribose 1-diphosphate: step 4/9. This Actinobacillus pleuropneumoniae serotype 5b (strain L20) protein is 1-(5-phosphoribosyl)-5-[(5-phosphoribosylamino)methylideneamino] imidazole-4-carboxamide isomerase.